The primary structure comprises 129 residues: Protein Wnt-6 (129 aa).

5 cysteine pairs are disulfide-bonded: C3/C17, C5/C12, C75/C106, C91/C101, and C128/C129. S9 carries O-palmitoleoyl serine; by PORCN lipidation. N-linked (GlcNAc...) asparagine glycosylation is present at N92.

The protein belongs to the Wnt family. Post-translationally, palmitoleoylation is required for efficient binding to frizzled receptors. Depalmitoleoylation leads to Wnt signaling pathway inhibition. At tailbud: dorsal, punctate; in adult: brain and heart.

Its subcellular location is the secreted. It localises to the extracellular space. It is found in the extracellular matrix. In terms of biological role, ligand for members of the frizzled family of seven transmembrane receptors. Probable developmental protein. May be a signaling molecule which affects the development of discrete regions of tissues. Is likely to signal over only few cell diameters. In Xenopus laevis (African clawed frog), this protein is Protein Wnt-6 (wnt6).